Here is a 498-residue protein sequence, read N- to C-terminus: ATP synthase subunit beta, chloroplastic (498 aa).

At threonine 6 the chain carries Phosphothreonine. Serine 13 is subject to Phosphoserine. An ATP-binding site is contributed by 172 to 179 (GGAGVGKT).

It belongs to the ATPase alpha/beta chains family. F-type ATPases have 2 components, CF(1) - the catalytic core - and CF(0) - the membrane proton channel. CF(1) has five subunits: alpha(3), beta(3), gamma(1), delta(1), epsilon(1). CF(0) has four main subunits: a(1), b(1), b'(1) and c(9-12).

The protein resides in the plastid. It is found in the chloroplast thylakoid membrane. It catalyses the reaction ATP + H2O + 4 H(+)(in) = ADP + phosphate + 5 H(+)(out). Produces ATP from ADP in the presence of a proton gradient across the membrane. The catalytic sites are hosted primarily by the beta subunits. In Arabis hirsuta (Hairy rock-cress), this protein is ATP synthase subunit beta, chloroplastic.